The primary structure comprises 503 residues: Catalase (503 aa).

The signal sequence occupies residues 1 to 21 (MHMSKSFLIISMGFVAVSVQA). Active-site residues include His-72 and Asn-145. Tyr-353 contributes to the heme binding site.

The protein belongs to the catalase family. The cofactor is heme.

It localises to the periplasm. It carries out the reaction 2 H2O2 = O2 + 2 H2O. Decomposes hydrogen peroxide into water and oxygen; serves to protect cells from the toxic effects of hydrogen peroxide. This is Catalase from Vibrio cholerae serotype O1 (strain ATCC 39315 / El Tor Inaba N16961).